The following is a 68-amino-acid chain: Large ribosomal subunit protein bL32 (68 aa).

The tract at residues 1 to 25 is disordered; sequence MAVPQNKITKSRRGQRRSHDALVAG.

Belongs to the bacterial ribosomal protein bL32 family.

The chain is Large ribosomal subunit protein bL32 from Dinoroseobacter shibae (strain DSM 16493 / NCIMB 14021 / DFL 12).